The sequence spans 389 residues: P2X purinoceptor 6 (389 aa).

Residues 1–45 lie on the Cytoplasmic side of the membrane; the sequence is MQLQPAGTGNMASAAAAALVSWGFLDYKTEKYVLTRNCRVGVSQR. Residues 46–66 form a helical membrane-spanning segment; sequence LLQLAVVVYVIGWALLAKKGY. Topologically, residues 67–335 are extracellular; it reads QERDLAPQTS…LVTGQAGKFA (269 aa). 3 disulfides stabilise this stretch: cysteine 129/cysteine 179, cysteine 140/cysteine 163, and cysteine 146/cysteine 173. N-linked (GlcNAc...) asparagine glycosylation is found at asparagine 167, asparagine 197, and asparagine 212. Disulfide bonds link cysteine 230-cysteine 240 and cysteine 274-cysteine 283. Residues 336–356 traverse the membrane as a helical segment; sequence LIPTAITVGTGAAWLGMVTFL. The Cytoplasmic portion of the chain corresponds to 357 to 389; sequence CDLLLLYVDREAGFYWRTKYEEARAPKTTTNSS.

The protein belongs to the P2X receptor family. As to quaternary structure, unlike most P2RXs, P2RX6 does not seem to form homotrimers. P2RX6 are likely to form as obligate heteromers with other P2RXs subunits. Forms heterotrimer with P2RX2 with a variable subunit stoichiometry determined by subunit expression levels. Forms heterotrimer with P2RX4; functional differences between homomeric P2RX4 and P2RX4/6 heterotrimer are minor. Forms a P2RX2/P2RX4/P2RX6 heterotrimer. Interacts with SF3A1; resulting in a reduction of the splicing activity. N-glycosylated. N-linked glycosylation can affect trafficking to the membrane and function. In terms of tissue distribution, predominantly expressed in skeletal muscle. Also expressed in lung.

It is found in the cell membrane. The protein localises to the endoplasmic reticulum. Its subcellular location is the nucleus. It localises to the nucleus inner membrane. The enzyme catalyses Ca(2+)(in) = Ca(2+)(out). In terms of biological role, acts as a modulatory subunit rather than a functional channel. Unlike other P2XRs members, P2RX6 does not seem to form functional homotrimers. P2RX6 requires the presence of P2RX4 or P2RX2 to form functional heterotrimeric receptors at the plasma membrane. P2RX6 can be translocated to the nucleus, where it interacts with the splicing factor (SF3A1), to reduce the incidence of mRNA splicing. May function as a nuclear regulator of post-transcriptional modifications in neurons. This is P2X purinoceptor 6 (P2rx6) from Mus musculus (Mouse).